The sequence spans 547 residues: Undecaprenyl phosphate-alpha-4-amino-4-deoxy-L-arabinose arabinosyl transferase (547 aa).

Helical transmembrane passes span 83–103 (FASAAATGLSALLIFWFALQL), 111–131 (FLASLIYLSLLIVYGIGTYSV), 174–194 (FLTKGFIALAVPVVVIVPYVI), 205–225 (FGPLAILSAVLLAAPWAIAVH), 253–273 (APFWYYLPMGLLGTLPWLGLL), 286–306 (ISPETLYLLAWVILPLLFFSI), 311–331 (LLTYILPCFAPLAMLMAANAV), 346–366 (AWLNGLFGLICLVVLAVLAFS), 378–398 (GALAVAMVIFAGWSLLGFIQL), and 408–428 (SALCPMVLAIGLPWALPQSLI).

Belongs to the glycosyltransferase 83 family.

It localises to the cell inner membrane. The catalysed reaction is 4-amino-4-deoxy-alpha-L-arabinopyranosyl di-trans,octa-cis-undecaprenyl phosphate + lipid IVA = lipid IIA + di-trans,octa-cis-undecaprenyl phosphate.. The protein operates within lipopolysaccharide metabolism; 4-amino-4-deoxy-beta-L-arabinose-lipid A biosynthesis. Its function is as follows. Catalyzes the transfer of the L-Ara4N moiety of the glycolipid undecaprenyl phosphate-alpha-L-Ara4N to lipid A. The modified arabinose is attached to lipid A and is required for resistance to polymyxin and cationic antimicrobial peptides. In Aeromonas hydrophila subsp. hydrophila (strain ATCC 7966 / DSM 30187 / BCRC 13018 / CCUG 14551 / JCM 1027 / KCTC 2358 / NCIMB 9240 / NCTC 8049), this protein is Undecaprenyl phosphate-alpha-4-amino-4-deoxy-L-arabinose arabinosyl transferase.